Here is a 298-residue protein sequence, read N- to C-terminus: Glyoxalase domain-containing protein 4 (298 aa).

Positions 5–130 constitute a VOC 1 domain; sequence RALHFVFKVK…GGYKFYLQDR (126 aa). Lysine 109 carries the N6-succinyllysine modification. Position 131 is a phosphoserine (serine 131). In terms of domain architecture, VOC 2 spans 137-258; sequence PVLKVTLAVS…DGHEICFVGD (122 aa). The residue at position 273 (lysine 273) is an N6-succinyllysine.

Belongs to the glyoxalase I family. As to quaternary structure, interacts with NUDT9.

The protein resides in the mitochondrion. This is Glyoxalase domain-containing protein 4 (Glod4) from Mus musculus (Mouse).